The sequence spans 218 residues: 5-oxoprolinase subunit B (218 aa).

Belongs to the PxpB family. As to quaternary structure, forms a complex composed of PxpA, PxpB and PxpC.

The catalysed reaction is 5-oxo-L-proline + ATP + 2 H2O = L-glutamate + ADP + phosphate + H(+). Functionally, catalyzes the cleavage of 5-oxoproline to form L-glutamate coupled to the hydrolysis of ATP to ADP and inorganic phosphate. The protein is 5-oxoprolinase subunit B of Escherichia coli O157:H7.